A 448-amino-acid chain; its full sequence is Probable glycine dehydrogenase (decarboxylating) subunit 1 (448 aa).

Belongs to the GcvP family. N-terminal subunit subfamily. As to quaternary structure, the glycine cleavage system is composed of four proteins: P, T, L and H. In this organism, the P 'protein' is a heterodimer of two subunits.

It carries out the reaction N(6)-[(R)-lipoyl]-L-lysyl-[glycine-cleavage complex H protein] + glycine + H(+) = N(6)-[(R)-S(8)-aminomethyldihydrolipoyl]-L-lysyl-[glycine-cleavage complex H protein] + CO2. In terms of biological role, the glycine cleavage system catalyzes the degradation of glycine. The P protein binds the alpha-amino group of glycine through its pyridoxal phosphate cofactor; CO(2) is released and the remaining methylamine moiety is then transferred to the lipoamide cofactor of the H protein. The protein is Probable glycine dehydrogenase (decarboxylating) subunit 1 of Geobacillus kaustophilus (strain HTA426).